We begin with the raw amino-acid sequence, 158 residues long: NADH-quinone oxidoreductase subunit B 1 (158 aa).

Residues C37, C38, C102, and C132 each contribute to the [4Fe-4S] cluster site.

Belongs to the complex I 20 kDa subunit family. In terms of assembly, NDH-1 is composed of 14 different subunits. Subunits NuoB, C, D, E, F, and G constitute the peripheral sector of the complex. The cofactor is [4Fe-4S] cluster.

It is found in the cell inner membrane. The enzyme catalyses a quinone + NADH + 5 H(+)(in) = a quinol + NAD(+) + 4 H(+)(out). NDH-1 shuttles electrons from NADH, via FMN and iron-sulfur (Fe-S) centers, to quinones in the respiratory chain. Couples the redox reaction to proton translocation (for every two electrons transferred, four hydrogen ions are translocated across the cytoplasmic membrane), and thus conserves the redox energy in a proton gradient. This chain is NADH-quinone oxidoreductase subunit B 1, found in Azoarcus sp. (strain BH72).